Consider the following 408-residue polypeptide: Formate-dependent phosphoribosylglycinamide formyltransferase (408 aa).

N(1)-(5-phospho-beta-D-ribosyl)glycinamide is bound by residues 25–26 and glutamate 85; that span reads EL. ATP-binding positions include arginine 118, lysine 159, 164–169, 199–202, and glutamate 207; these read SSGKGQ and EAFV. Residues 123–318 enclose the ATP-grasp domain; that stretch reads KLAAEELGLP…EFELHAKAIL (196 aa). Mg(2+) is bound by residues glutamate 277 and glutamate 289. N(1)-(5-phospho-beta-D-ribosyl)glycinamide is bound by residues aspartate 296, lysine 365, and 372–373; that span reads RR.

It belongs to the PurK/PurT family. As to quaternary structure, homodimer.

The catalysed reaction is N(1)-(5-phospho-beta-D-ribosyl)glycinamide + formate + ATP = N(2)-formyl-N(1)-(5-phospho-beta-D-ribosyl)glycinamide + ADP + phosphate + H(+). The protein operates within purine metabolism; IMP biosynthesis via de novo pathway; N(2)-formyl-N(1)-(5-phospho-D-ribosyl)glycinamide from N(1)-(5-phospho-D-ribosyl)glycinamide (formate route): step 1/1. Its function is as follows. Involved in the de novo purine biosynthesis. Catalyzes the transfer of formate to 5-phospho-ribosyl-glycinamide (GAR), producing 5-phospho-ribosyl-N-formylglycinamide (FGAR). Formate is provided by PurU via hydrolysis of 10-formyl-tetrahydrofolate. The chain is Formate-dependent phosphoribosylglycinamide formyltransferase from Corynebacterium glutamicum (strain R).